The chain runs to 443 residues: Glucose-6-phosphate isomerase (443 aa).

The active-site Proton donor is the E285. Residues H306 and K420 contribute to the active site.

It belongs to the GPI family.

Its subcellular location is the cytoplasm. It carries out the reaction alpha-D-glucose 6-phosphate = beta-D-fructose 6-phosphate. Its pathway is carbohydrate biosynthesis; gluconeogenesis. It participates in carbohydrate degradation; glycolysis; D-glyceraldehyde 3-phosphate and glycerone phosphate from D-glucose: step 2/4. Its function is as follows. Catalyzes the reversible isomerization of glucose-6-phosphate to fructose-6-phosphate. This is Glucose-6-phosphate isomerase from Staphylococcus aureus (strain Mu3 / ATCC 700698).